Reading from the N-terminus, the 1013-residue chain is A-type ATP synthase subunit A (1013 aa).

The DOD-type homing endonuclease domain occupies 392–525 (FLGYVIGDGT…LTYLLAKLGI (134 aa)).

Belongs to the ATPase alpha/beta chains family. As to quaternary structure, has multiple subunits with at least A(3), B(3), C, D, E, F, H, I and proteolipid K(x). Post-translationally, this protein undergoes a protein self splicing that involves a post-translational excision of the VDE intervening region (intein) followed by peptide ligation.

The protein localises to the cell membrane. It catalyses the reaction ATP + H2O + 4 H(+)(in) = ADP + phosphate + 5 H(+)(out). Functionally, component of the A-type ATP synthase that produces ATP from ADP in the presence of a proton gradient across the membrane. The A chain is the catalytic subunit. In Pyrococcus furiosus (strain ATCC 43587 / DSM 3638 / JCM 8422 / Vc1), this protein is A-type ATP synthase subunit A.